A 32-amino-acid polypeptide reads, in one-letter code: Natriuretic peptide Coa_NP1 (32 aa).

A disulfide bond links Cys-8 and Cys-24.

This sequence belongs to the natriuretic peptide family. Snake NP subfamily. Expressed by the venom gland.

The protein resides in the secreted. Its function is as follows. Snake venom natriuretic peptide that exhibits hypotensive and vasodepressor activity in rats. The polypeptide is Natriuretic peptide Coa_NP1 (Crotalus lutosus abyssus (Grand Canyon rattlesnake)).